The following is a 2176-amino-acid chain: Protein sidekick-2 (2176 aa).

Positions 1-24 (MFSSMWRLPLWTLLALHRIHSAGA) are cleaved as a signal peptide. The Extracellular segment spans residues 25–1936 (QDDVPPYFKT…ASPFYEEWWF (1912 aa)). Ig-like C2-type domains follow at residues 30 to 112 (PYFK…TEVQ), 117 to 204 (GSFE…QPIT), 219 to 298 (PTII…SSVA), 312 to 402 (PQFV…LAVT), 406 to 495 (PNIT…ADLV), and 500 to 589 (TRIT…AHLR). C52 and C95 are disulfide-bonded. The N-linked (GlcNAc...) asparagine glycan is linked to N197. Disulfide bonds link C241–C288, C334–C384, C427–C479, and C521–C573. Fibronectin type-III domains are found at residues 596-692 (APEH…LPEE), 697-793 (PPQN…TLQG), 798-897 (PPGN…THED), 901-995 (PVGH…VPPE), 999-1098 (APTN…TLQA), 1103-1201 (APAN…TRES), 1206-1303 (GPTN…TLDD), 1307-1401 (PPMG…TEKR), 1406-1503 (PPSK…TLQA), 1508-1625 (APTI…VGEA), 1630-1726 (APQN…TQQA), 1730-1825 (APGS…TGPG), and 1828-1930 (APGP…ASPF). N747 is a glycosylation site (N-linked (GlcNAc...) asparagine). N940 and N952 each carry an N-linked (GlcNAc...) asparagine glycan. The N-linked (GlcNAc...) asparagine glycan is linked to N1106. A glycan (N-linked (GlcNAc...) asparagine) is linked at N1592. Residues 1712–1734 (DGPRSTPTRGQTQQAAPSAPGSV) form a disordered region. A compositionally biased stretch (polar residues) spans 1716–1727 (STPTRGQTQQAA). The chain crosses the membrane as a helical span at residues 1937–1957 (LVVIALVGLIFILLLVFVLII). The Cytoplasmic portion of the chain corresponds to 1958–2176 (RGQSKKYSKK…APIAGFSSFV (219 aa)). 3 disordered regions span residues 2013–2032 (GLYTRSPPRPSPGSLHYSDE), 2043–2070 (AESSSLTEKPSEISDSQGSDSEYEVDTN), and 2102–2176 (QAYS…SSFV). Composition is skewed to polar residues over residues 2044–2070 (ESSSLTEKPSEISDSQGSDSEYEVDTN) and 2119–2129 (VPNSNSTQQGS). The short motif at 2170 to 2176 (AGFSSFV) is the PDZ-binding element.

Belongs to the sidekick family. In terms of assembly, homodimer; mediates homophilic interactions to promote cell adhesion. Interacts (via PDZ-binding motif) with MAGI1, MAGI2, DLG2, DLG3 and DLG4. In terms of tissue distribution, expressed in retinal ganglion cells (RGCs) that form synapses in distinct inner plexiform layer (IPL) sublaminae. Specifically expressed in specific subsets of retinal ganglion cells (RGCs), named W3B-RGCs, that specifically respond when the timing of the movement of a small object differs from that of the background, but not when they coincide (at protein level). Also present in excitatory amacrine cell type called VG3-ACs, that provide strong and selective input W3B-RGCs (at protein level). Expressed at low levels in the glomeruli.

It is found in the cell membrane. It localises to the synapse. Functionally, adhesion molecule that promotes lamina-specific synaptic connections in the retina and is specifically required for the formation of neuronal circuits that detect motion. Acts by promoting formation of synapses between two specific retinal cell types: the retinal ganglion cells W3B-RGCs and the excitatory amacrine cells VG3-ACs. Formation of synapses between these two cells plays a key role in detection of motion. Promotes synaptic connectivity via homophilic interactions. In Mus musculus (Mouse), this protein is Protein sidekick-2.